Here is a 138-residue protein sequence, read N- to C-terminus: Large ribosomal subunit protein uL16 (138 aa).

The protein belongs to the universal ribosomal protein uL16 family. As to quaternary structure, part of the 50S ribosomal subunit.

Binds 23S rRNA and is also seen to make contacts with the A and possibly P site tRNAs. The chain is Large ribosomal subunit protein uL16 from Paramagnetospirillum magneticum (strain ATCC 700264 / AMB-1) (Magnetospirillum magneticum).